Reading from the N-terminus, the 321-residue chain is Phosphoenolpyruvate transferase (321 aa).

Asp-51 provides a ligand contact to 7,8-didemethyl-8-hydroxy-5-deazariboflavin.

This sequence belongs to the CofD family. In terms of assembly, homodimer. It depends on Mg(2+) as a cofactor.

It carries out the reaction enolpyruvoyl-2-diphospho-5'-guanosine + 7,8-didemethyl-8-hydroxy-5-deazariboflavin = dehydro coenzyme F420-0 + GMP + H(+). The protein operates within cofactor biosynthesis; coenzyme F420 biosynthesis. Its function is as follows. Catalyzes the transfer of the phosphoenolpyruvate moiety from enoylpyruvoyl-2-diphospho-5'-guanosine (EPPG) to 7,8-didemethyl-8-hydroxy-5-deazariboflavin (FO) with the formation of dehydro coenzyme F420-0 and GMP. The protein is Phosphoenolpyruvate transferase of Kitasatospora aureofaciens (Streptomyces aureofaciens).